The following is a 378-amino-acid chain: Succinyl-diaminopimelate desuccinylase (378 aa).

Position 68 (H68) interacts with Zn(2+). The active site involves D70. A Zn(2+)-binding site is contributed by D101. E135 serves as the catalytic Proton acceptor. Zn(2+) is bound by residues E136, E164, and H350.

The protein belongs to the peptidase M20A family. DapE subfamily. As to quaternary structure, homodimer. Zn(2+) is required as a cofactor. The cofactor is Co(2+).

It carries out the reaction N-succinyl-(2S,6S)-2,6-diaminopimelate + H2O = (2S,6S)-2,6-diaminopimelate + succinate. It participates in amino-acid biosynthesis; L-lysine biosynthesis via DAP pathway; LL-2,6-diaminopimelate from (S)-tetrahydrodipicolinate (succinylase route): step 3/3. Functionally, catalyzes the hydrolysis of N-succinyl-L,L-diaminopimelic acid (SDAP), forming succinate and LL-2,6-diaminopimelate (DAP), an intermediate involved in the bacterial biosynthesis of lysine and meso-diaminopimelic acid, an essential component of bacterial cell walls. In Acinetobacter baumannii (strain ATCC 17978 / DSM 105126 / CIP 53.77 / LMG 1025 / NCDC KC755 / 5377), this protein is Succinyl-diaminopimelate desuccinylase.